The chain runs to 355 residues: Alanine racemase (355 aa).

The active-site Proton acceptor; specific for D-alanine is Lys34. Lys34 is subject to N6-(pyridoxal phosphate)lysine. Arg133 contributes to the substrate binding site. Catalysis depends on Tyr249, which acts as the Proton acceptor; specific for L-alanine. Substrate is bound at residue Met297.

Belongs to the alanine racemase family. Pyridoxal 5'-phosphate serves as cofactor.

It catalyses the reaction L-alanine = D-alanine. The protein operates within amino-acid biosynthesis; D-alanine biosynthesis; D-alanine from L-alanine: step 1/1. Functionally, catalyzes the interconversion of L-alanine and D-alanine. May also act on other amino acids. This Rickettsia akari (strain Hartford) protein is Alanine racemase (alr).